The sequence spans 431 residues: Ammonium transporter 3 (431 aa).

The Extracellular segment spans residues 1 to 27 (MEQFSTSSSESSDSSSEYSLEFYMDTS). A helical transmembrane segment spans residues 28 to 48 (WVLDAANLVFFMQAGFGMLEA). The Cytoplasmic portion of the chain corresponds to 49–63 (GMVRAKNTKSILLKN). The helical transmembrane segment at 64-84 (LINTAICAISYYCVGHSFAYG) threads the bilayer. Residues 85–102 (KVNPNSFVGFGNFFLMDY) lie on the Extracellular side of the membrane. A helical transmembrane segment spans residues 103–125 (THYAYWMIQWAYAATATTIATGA). Over 126–134 (MAERLQLHC) the chain is Cytoplasmic. A helical membrane pass occupies residues 135-155 (YILFTLVQTILIYPFVAHWIW). Residues 156–160 (SQNGW) are Extracellular-facing. Residues 161–181 (LFDLGIVDFAGGAVIHIVAGI) form a helical membrane-spanning segment. Residues 182–211 (TGACGSFLLGPRIGRFNQESGKPKNLPGHS) are Cytoplasmic-facing. A helical transmembrane segment spans residues 212–232 (VVLMSLGAMILWYSWYGYTAG). Topologically, residues 233 to 249 (ASLGMTRSRVLPASRVS) are extracellular. A helical transmembrane segment spans residues 250-270 (VVVTLSGATGLITVLGIGKIF). Residues 271-300 (NGHYDLVKGINGLIAGLVSSTSSCAYIEPW) lie on the Cytoplasmic side of the membrane. The chain crosses the membrane as a helical span at residues 301-321 (AAIIIGFIGGIVYWFSSWALL). The Extracellular segment spans residues 322–333 (NWLRLDDPVDST). Residues 334–354 (AIHLFGGCWSLISVAFFATHG) form a helical membrane-spanning segment. The Cytoplasmic segment spans residues 355–357 (RVR). Residues 358–378 (NPDIILPGGIFYGGGISLLWV) form a helical membrane-spanning segment. Residue Gln-379 is a topological domain, extracellular. The chain crosses the membrane as a helical span at residues 380–400 (LVGMVLAILWAGFLSGIFFFT). At 401-431 (MDYFGKLRVDVDTELAGLDNSNHGGSAYIFD) the chain is on the cytoplasmic side.

This sequence belongs to the ammonia transporter channel (TC 1.A.11.2) family.

It is found in the cell membrane. Its subcellular location is the endosome membrane. The protein resides in the cytoplasmic vesicle. It localises to the phagosome membrane. In terms of biological role, ammonium transporter that mediates the import of ammonium in prespore cells. Controls ammonium homeostasis during growth and development. Ammonium has been shown to function as a morphogen at multiple steps during the development. May function as an ammonia sensor that relays information concerning ammonia concentrations to the signaling pathway involved in the slug versus culmination choice and regulates prestalk gene expression. This Dictyostelium discoideum (Social amoeba) protein is Ammonium transporter 3 (amtC).